Reading from the N-terminus, the 148-residue chain is MTSPLLISLASCLVAVNQASLIGRCDLAKVLHQEDLDGFEGYSLTDWLCLAFVESDFNITKVNENTDGSFDYGIFQINSHYWCNDYQSRTENNCQVDCQELLSPNLLAIINCAKKIVSGAGGMKNWVKWRLHCAGRPLSYWMTGCHLA.

Positions 1–19 are cleaved as a signal peptide; sequence MTSPLLISLASCLVAVNQA. A C-type lysozyme domain is found at 20–148; it reads SLIGRCDLAK…SYWMTGCHLA (129 aa). 4 disulfides stabilise this stretch: cysteine 25/cysteine 145, cysteine 49/cysteine 133, cysteine 83/cysteine 98, and cysteine 94/cysteine 112. Residues glutamate 54 and aspartate 71 contribute to the active site.

The protein belongs to the glycosyl hydrolase 22 family. As to quaternary structure, monomer.

Its subcellular location is the secreted. It is found in the cell surface. The protein resides in the cell projection. The protein localises to the cilium. It localises to the flagellum. The enzyme catalyses Hydrolysis of (1-&gt;4)-beta-linkages between N-acetylmuramic acid and N-acetyl-D-glucosamine residues in a peptidoglycan and between N-acetyl-D-glucosamine residues in chitodextrins.. May be involved sperm-egg plasma membrane adhesion and fusion during fertilization. Exhibits bacteriolytic activity in vitro against Micrococcus luteus and Staphylococcus aureus. Shows weak bacteriolytic activity against Gram-positive bacteria at physiological pH. Bacteriolytic activity is pH-dependent, with a maximum at around pH 5.6. This Bos taurus (Bovine) protein is Lysozyme-like protein 6 (LYZL6).